A 58-amino-acid chain; its full sequence is Large ribosomal subunit protein bL32 (58 aa).

Basic residues predominate over residues 1 to 15; it reads MAVPKKKTSKAKRNQ. A disordered region spans residues 1-23; sequence MAVPKKKTSKAKRNQRSATWKGK.

The protein belongs to the bacterial ribosomal protein bL32 family.

In Synechococcus sp. (strain CC9902), this protein is Large ribosomal subunit protein bL32.